Reading from the N-terminus, the 208-residue chain is Outer-membrane lipoprotein carrier protein (208 aa).

The N-terminal stretch at 1 to 24 (MRMNIVQKILSATCFALLPLLAHA) is a signal peptide.

The protein belongs to the LolA family. In terms of assembly, monomer.

Its subcellular location is the periplasm. Its function is as follows. Participates in the translocation of lipoproteins from the inner membrane to the outer membrane. Only forms a complex with a lipoprotein if the residue after the N-terminal Cys is not an aspartate (The Asp acts as a targeting signal to indicate that the lipoprotein should stay in the inner membrane). The chain is Outer-membrane lipoprotein carrier protein from Dechloromonas aromatica (strain RCB).